The following is a 609-amino-acid chain: Autophagy-related protein 22-1 (609 aa).

4 consecutive transmembrane segments (helical) span residues 95 to 115 (YYAGGPTVVSQCVVYIFGVEI), 117 to 137 (TASFAMYTFSVSVFIQAILII), 151 to 171 (LLLVAFAVIGSVSTMLFLGVV), and 176 to 196 (MVGAVIAIIANTCFGASFVLL). The disordered stretch occupies residues 214 to 238 (AREPPPALDGSRAQEGHSDTTNDID). Basic and acidic residues predominate over residues 225-238 (RAQEGHSDTTNDID). N-linked (GlcNAc...) asparagine glycosylation is present at Asn-244. Residues 287-307 (IGIGYIGAIILQIVCILVVIA) traverse the membrane as a helical segment. An N-linked (GlcNAc...) asparagine glycan is attached at Asn-309. A run of 3 helical transmembrane segments spans residues 317–337 (LVLFLIGLWWFIFTIPAALWL), 381–401 (ILLFLAAWLLLSDGIATVSGT), and 415–435 (AALGLINVIAMVAGVLGAFSW). Residue Asn-443 is glycosylated (N-linked (GlcNAc...) asparagine). 4 consecutive transmembrane segments (helical) span residues 450-470 (IIACILLFELVPLYGLLGFIP), 487-509 (FPLGIVYGLVMGGLSSYCRSFFG), 522-542 (ALYAITDKGSSIFGPAIVGII), and 552-572 (AFVFLAILIFLPLPLMLLVDV).

This sequence belongs to the ATG22 family.

The protein resides in the vacuole membrane. Vacuolar effluxer which mediate the efflux of amino acids resulting from autophagic degradation. The release of autophagic amino acids allows the maintenance of protein synthesis and viability during nitrogen starvation. The chain is Autophagy-related protein 22-1 (atg22-1) from Neosartorya fischeri (strain ATCC 1020 / DSM 3700 / CBS 544.65 / FGSC A1164 / JCM 1740 / NRRL 181 / WB 181) (Aspergillus fischerianus).